The chain runs to 539 residues: MLGQMMTQPLLISSLIDHAARYHGQTEIVSVETDGTVTRTNWGEIAANARRMGSALTKLGLQPQDRIGTLAWNNRRHLEIYYAASGAGFVCHTINPRLFPEQLVYIINHAQDRVLFFDATFLPLVAAIRDQLTEVKHFVLMGPRNEDALQQIPGLEFYDELIETGDTDFEWPVFDENTASSLCYTSGTTGHPKGVLYSHRSTVLHSFASNTRDVIGYSAMDVVMPVVPMFHVNAWGSPYGCAMSGAQMVLPGPDLHGEALVNLIDTYGVTLAMGVPTIWQGLLAHAAKCGTKLESLERTVIGGAACPPSMIATFREKYGVDTVHAWGMSEMSPLGTANIPLAKHRKLPIEEQHKLRENQGRPPFGVELKIVDDDGNDLPHDGVTQGDLMVRGHWVLDSYFQLKDQELLQDGWFATGDVATLDPDGYMTIRDRSKDIIKSGGEWISSVELENIAVAHPKLATAAVIGVPHPKWDERPLLVAVKAEGEDPSEAELLEFFDGKIAKWQVPDKVVFVDALPLNATGKVLKRKLRDEFKDALTG.

Thr-185 provides a ligand contact to Mg(2+). ATP contacts are provided by His-231, Gly-303, His-324, Ala-325, and Ser-329. Glu-330 contacts Mg(2+). ATP-binding residues include Gln-359, Asp-417, Arg-432, and Lys-523.

It belongs to the ATP-dependent AMP-binding enzyme family. As to quaternary structure, homodimer. Mg(2+) is required as a cofactor.

The catalysed reaction is 3-(methylsulfanyl)propanoate + ATP + CoA = 3-(methylsulfanyl)propanoyl-CoA + AMP + diphosphate. ADP acts as a competitive inhibitor and inhibits the ligase activity. Involved in the assimilation of dimethylsulphoniopropionate (DMSP), an important compound in the fixation of carbon in marine phytoplankton. Catalyzes the ATP-dependent ligation of methylmercaptopropionate (MMPA) and CoA to yield methylmercaptopropionate-CoA (MMPA-CoA). This Ruegeria lacuscaerulensis (strain DSM 11314 / KCTC 2953 / ITI-1157) (Silicibacter lacuscaerulensis) protein is 3-methylmercaptopropionyl-CoA ligase.